The chain runs to 150 residues: Dual specificity protein phosphatase 23 (150 aa).

The region spanning 7–150 (NFSWVLPGRL…AVFQFYQRTK (144 aa)) is the Tyrosine-protein phosphatase domain. Cys95 (phosphocysteine intermediate) is an active-site residue.

This sequence belongs to the protein-tyrosine phosphatase family. Non-receptor class dual specificity subfamily. Widely expressed. Highly expressed in spleen, prostate, colon, adrenal gland, mammary gland, thyroid and trachea. Expressed at lower level in uterus, small intestine, bladder, bone marrow, brain, spinal cord and stomach.

It localises to the cytoplasm. Its subcellular location is the cytosol. It is found in the nucleus. It catalyses the reaction O-phospho-L-tyrosyl-[protein] + H2O = L-tyrosyl-[protein] + phosphate. It carries out the reaction O-phospho-L-seryl-[protein] + H2O = L-seryl-[protein] + phosphate. The catalysed reaction is O-phospho-L-threonyl-[protein] + H2O = L-threonyl-[protein] + phosphate. In terms of biological role, protein phosphatase that mediates dephosphorylation of proteins phosphorylated on Tyr and Ser/Thr residues. In vitro, it can dephosphorylate p44-ERK1 (MAPK3) but not p54 SAPK-beta (MAPK10) in vitro. Able to enhance activation of JNK and p38 (MAPK14). This Homo sapiens (Human) protein is Dual specificity protein phosphatase 23 (DUSP23).